Here is a 245-residue protein sequence, read N- to C-terminus: DnaJ homolog subfamily B member 6-B (245 aa).

One can recognise a J domain in the interval 3-69 (EYYDVLGVQR…KKRDIYDKYG (67 aa)).

In terms of assembly, homooligomer.

It is found in the cytoplasm. Its subcellular location is the perinuclear region. The protein localises to the nucleus. Has a stimulatory effect on the ATPase activity of HSP70 in a dose-dependent and time-dependent manner and hence acts as a co-chaperone of HSP70. Plays an indispensable role in the organization of KRT8/KRT18 filaments. Acts as an endogenous molecular chaperone for neuronal proteins including huntingtin. Suppresses aggregation and toxicity of polyglutamine-containing, aggregation-prone proteins. Also reduces cellular toxicity and caspase-3 activity. The protein is DnaJ homolog subfamily B member 6-B (dnajb6-b) of Xenopus laevis (African clawed frog).